The following is a 259-amino-acid chain: uncharacterized protein (259 aa).

This sequence belongs to the ParA family.

This is an uncharacterized protein from Methanocaldococcus jannaschii (strain ATCC 43067 / DSM 2661 / JAL-1 / JCM 10045 / NBRC 100440) (Methanococcus jannaschii).